The chain runs to 230 residues: Protein STK_02290 (230 aa).

Positions 15–213 (NLGKVLIKIA…EEKPKSEKIL (199 aa)) constitute an AMMECR1 domain.

This Sulfurisphaera tokodaii (strain DSM 16993 / JCM 10545 / NBRC 100140 / 7) (Sulfolobus tokodaii) protein is Protein STK_02290.